The sequence spans 395 residues: DDB1- and CUL4-associated factor 4-like protein 2 (395 aa).

WD repeat units follow at residues 268 to 307 and 312 to 351; these read SHDS…CVTQ and VNNS…LLTT.

This Homo sapiens (Human) protein is DDB1- and CUL4-associated factor 4-like protein 2 (DCAF4L2).